The primary structure comprises 190 residues: UPF0301 protein Rmet_2743 (190 aa).

This sequence belongs to the UPF0301 (AlgH) family.

This Cupriavidus metallidurans (strain ATCC 43123 / DSM 2839 / NBRC 102507 / CH34) (Ralstonia metallidurans) protein is UPF0301 protein Rmet_2743.